The primary structure comprises 664 residues: MAGLSSSQIPDGEFTAVVYRLIRDSRYSEAVQLLSAELQGSPRSRAGLSLLAYCYYRLQEFELAAECYEQLSQMHPELEQYRLYQAQALYKACLYPEATRVAFLLDNPTYQTRVLRLQAAIKYSEGDLPGARSLVEQLLSGEGAEDSGGENDYDGQINLGCLLYKEGHYEAACSKFLAALQASGYQPDISYNLALAYYSSRQYAPALKHIADIIERGIRQHPELGVGMTTEGIDVRSVGNTIVLHQTALVEAFNLKAAIEYQLRNYEAAQEALTDMPPRAEEELDPVTLHNQALMNMDAKPTEGFEKLQFLLQQNPFPPETFGNLLLLYCKYEYFDLAADVLAENAHLTYKFLTPYLYDFLDAMITCQTAPEEAFIKLDGLAGMLTEQLRRLTIQVQDARHSRDDESAKKAVNDYDETLEKYIPVLMAQAKIYWNLENYPMVEKIFRKSVEFCNDHDVWKLNVAHVLFMQENKYKEAIGFYEPIVKKNYDNILSVSAIVLANLCVSYIMTSQNEEAEELMRKIEKEEEQLSYDDPDKKIYHLCIVNLVIGTLYCAKGNYDFGISRVIKSLEPYHKKLGTDTWYYAKRCFLSLLENMSKHTIMLRDSVIQECVQFLEHCELYGRSIPAIIEQPLEEERMHTGKNTVTYESRKLRALIYEIIGWNM.

TPR repeat units follow at residues 11–44 (DGEFTAVVYRLIRDSRYSEAVQLLSAELQGSPRS), 45–78 (RAGLSLLAYCYYRLQEFELAAECYEQLSQMHPEL), 153–186 (YDGQINLGCLLYKEGHYEAACSKFLAALQASGYQ), 188–220 (DISYNLALAYYSSRQYAPALKHIADIIERGIRQ), 385–418 (LTEQLRRLTIQVQDARHSRDDESAKKAVNDYDET), 423–456 (IPVLMAQAKIYWNLENYPMVEKIFRKSVEFCNDH), and 458–491 (VWKLNVAHVLFMQENKYKEAIGFYEPIVKKNYDN). Residues 507–534 (YIMTSQNEEAEELMRKIEKEEEQLSYDD) are a coiled coil. The stretch at 543–576 (CIVNLVIGTLYCAKGNYDFGISRVIKSLEPYHKK) is one TPR 8 repeat.

This sequence belongs to the TTC30/dfy-1/fleer family. Interacts with the IFT B complex components IFT27, IFT46, IFT74, IFT52, IFT57, IFT80, IFT81 and IFT88. Interacts with KIF17.

It is found in the cell projection. The protein resides in the cilium. Functionally, required for polyglutamylation of axonemal tubulin. Plays a role in anterograde intraflagellar transport (IFT), the process by which cilia precursors are transported from the base of the cilium to the site of their incorporation at the tip. This Rattus norvegicus (Rat) protein is Intraflagellar transport protein 70B (Ift70b).